Here is a 307-residue protein sequence, read N- to C-terminus: tRNA dimethylallyltransferase 2 (307 aa).

9–16 (GPTAVGKT) lines the ATP pocket. 11–16 (TAVGKT) is a substrate binding site. The interval 34-37 (DSRQ) is interaction with substrate tRNA.

Belongs to the IPP transferase family. Monomer. The cofactor is Mg(2+).

It carries out the reaction adenosine(37) in tRNA + dimethylallyl diphosphate = N(6)-dimethylallyladenosine(37) in tRNA + diphosphate. Its function is as follows. Catalyzes the transfer of a dimethylallyl group onto the adenine at position 37 in tRNAs that read codons beginning with uridine, leading to the formation of N6-(dimethylallyl)adenosine (i(6)A). This chain is tRNA dimethylallyltransferase 2, found in Azobacteroides pseudotrichonymphae genomovar. CFP2.